A 227-amino-acid polypeptide reads, in one-letter code: Cytidylate kinase (227 aa).

ATP is bound at residue 11–19 (GPSGAGKGT).

The protein belongs to the cytidylate kinase family. Type 1 subfamily.

It localises to the cytoplasm. The enzyme catalyses CMP + ATP = CDP + ADP. The catalysed reaction is dCMP + ATP = dCDP + ADP. This Pasteurella multocida (strain Pm70) protein is Cytidylate kinase.